Here is a 534-residue protein sequence, read N- to C-terminus: Peptide chain release factor 3 (534 aa).

Positions 9 to 278 (SRRRTFAIIS…FFVEHAPPPQ (270 aa)) constitute a tr-type G domain. Residues 18–25 (SHPDAGKT), 86–90 (DTPGH), and 140–143 (NKLD) each bind GTP.

It belongs to the TRAFAC class translation factor GTPase superfamily. Classic translation factor GTPase family. PrfC subfamily.

Its subcellular location is the cytoplasm. Increases the formation of ribosomal termination complexes and stimulates activities of RF-1 and RF-2. It binds guanine nucleotides and has strong preference for UGA stop codons. It may interact directly with the ribosome. The stimulation of RF-1 and RF-2 is significantly reduced by GTP and GDP, but not by GMP. The polypeptide is Peptide chain release factor 3 (Stenotrophomonas maltophilia (strain R551-3)).